Consider the following 287-residue polypeptide: Glutamate racemase (287 aa).

Substrate-binding positions include 32-33 (DS) and 64-65 (YG). The active-site Proton donor/acceptor is the Cys-96. 97 to 98 (NT) is a binding site for substrate. The active-site Proton donor/acceptor is Cys-208. Substrate is bound at residue 209-210 (TH).

This sequence belongs to the aspartate/glutamate racemases family.

The enzyme catalyses L-glutamate = D-glutamate. It functions in the pathway cell wall biogenesis; peptidoglycan biosynthesis. In terms of biological role, provides the (R)-glutamate required for cell wall biosynthesis. In Yersinia enterocolitica serotype O:8 / biotype 1B (strain NCTC 13174 / 8081), this protein is Glutamate racemase.